The sequence spans 459 residues: tRNA uridine(34) acetyltransferase (459 aa).

Residues 1–278 (MKKLSRTISG…VPPYVRISRV (278 aa)) are radical S-adenosyl-L-methionine (rSAM). In terms of domain architecture, Radical SAM core spans 6-271 (RTISGVTPVA…IADIKALVPP (266 aa)). The [4Fe-4S] cluster site is built by Cys-23, Cys-27, and Cys-30. Residue Lys-77 participates in acetyl-CoA binding. Positions 308–459 (QKCRCIRCRE…VAGYMCKHLD (152 aa)) are N-acetyltransferase. Zn(2+) contacts are provided by Cys-310, Cys-312, and Cys-315. Acetyl-CoA contacts are provided by residues 386–389 (ELHV), 409–411 (LGR), and Tyr-442.

This sequence belongs to the ELP3 family. As to quaternary structure, homodimer. [4Fe-4S] cluster serves as cofactor.

The catalysed reaction is uridine(34) in tRNA + acetyl-CoA + S-adenosyl-L-methionine + H2O = 5-(carboxymethyl)uridine(34) in tRNA + 5'-deoxyadenosine + L-methionine + CoA + 2 H(+). Its pathway is tRNA modification. TRNA uridine(34) acetyltransferase, which mediates formation of carboxymethyluridine in the wobble base at position 34 in tRNAs. The proposed mechanism is the following: (i) recruits S-adenosyl-L-methionine and cleaves it to generate a 5'-deoxyadenosine radical (5'-dA) in the radical S-adenosyl-L-methionine (rSAM) region, (ii) hydrolyzes acetyl-CoA in the N-acetyltransferase domain and (iii) an acetyl radical is formed by the products of the two domains and (iv) is transferred onto the C5 position of uridine(34) in the bound tRNA molecule. Does not show protein lysine acetyltransferase activity. The sequence is that of tRNA uridine(34) acetyltransferase from Dehalococcoides mccartyi (strain CBDB1).